A 126-amino-acid chain; its full sequence is Large ribosomal subunit protein bL20 (126 aa).

The protein belongs to the bacterial ribosomal protein bL20 family.

Binds directly to 23S ribosomal RNA and is necessary for the in vitro assembly process of the 50S ribosomal subunit. It is not involved in the protein synthesizing functions of that subunit. The sequence is that of Large ribosomal subunit protein bL20 from Acholeplasma laidlawii (strain PG-8A).